A 557-amino-acid chain; its full sequence is Formate--tetrahydrofolate ligase (557 aa).

An ATP-binding site is contributed by 66–73 (TPAGEGKS).

It belongs to the formate--tetrahydrofolate ligase family.

The enzyme catalyses (6S)-5,6,7,8-tetrahydrofolate + formate + ATP = (6R)-10-formyltetrahydrofolate + ADP + phosphate. The protein operates within one-carbon metabolism; tetrahydrofolate interconversion. The chain is Formate--tetrahydrofolate ligase from Clostridium botulinum (strain Loch Maree / Type A3).